A 303-amino-acid chain; its full sequence is MKVAVLLGGTSSERPVSLVSGEAAIEALREKGHDVTPIDVGPDIATTIASLKAAAPDVVFNALHGPRGEDGAIQGVLEWLGLPYTHSGIRASAVAMDKGATRILLAAAGLPVAQGRVVTVEELAEADPLPAPYVIKPVAEGSSVGVEIVRTGDNRRAEIARTWRFGKEALVESFIPGRELTAGVMGDRALAVTDILPSETAAFYDFEAKYKAGGSRHVVPAELPQAVTDRALDYALRAHQTLGCQGASRTDFRYDEGTDTLVILEVNTQPGMTPTSLLPEQAAYCGISYPELCDWMVREALAR.

The 197-residue stretch at 102-298 (RILLAAAGLP…YPELCDWMVR (197 aa)) folds into the ATP-grasp domain. 128–181 (PLPAPYVIKPVAEGSSVGVEIVRTGDNRRAEIARTWRFGKEALVESFIPGRELT) provides a ligand contact to ATP. Mg(2+) is bound by residues Asp251, Glu265, and Asn267.

This sequence belongs to the D-alanine--D-alanine ligase family. Mg(2+) is required as a cofactor. The cofactor is Mn(2+).

The protein localises to the cytoplasm. It carries out the reaction 2 D-alanine + ATP = D-alanyl-D-alanine + ADP + phosphate + H(+). Its pathway is cell wall biogenesis; peptidoglycan biosynthesis. Cell wall formation. This is D-alanine--D-alanine ligase from Gluconobacter oxydans (strain 621H) (Gluconobacter suboxydans).